Here is a 159-residue protein sequence, read N- to C-terminus: Ribosomal RNA large subunit methyltransferase H (159 aa).

S-adenosyl-L-methionine is bound by residues L76, G108, and 127–132 (FSKMTL).

This sequence belongs to the RNA methyltransferase RlmH family. Homodimer.

It is found in the cytoplasm. The catalysed reaction is pseudouridine(1915) in 23S rRNA + S-adenosyl-L-methionine = N(3)-methylpseudouridine(1915) in 23S rRNA + S-adenosyl-L-homocysteine + H(+). Functionally, specifically methylates the pseudouridine at position 1915 (m3Psi1915) in 23S rRNA. This chain is Ribosomal RNA large subunit methyltransferase H, found in Bacillus mycoides (strain KBAB4) (Bacillus weihenstephanensis).